The chain runs to 471 residues: MKLPNKLGPIHFIGIGGIGMSGIAEVMHNLGYTVQGSDAADNYNVRRLAEKGIRTFVGHRGENLADAELVVVSTAIRRDNPELALARERRLPVVRRAEMLAELMRFKSCVAVAGTHGKTTTTSLVATLLDAGGLDPTVINGGIINAYGTNARMGEGDWMVVEADESDGTFLKLPADIAIVTNIDPEHLDHFGSFDAIKDAFRAFIDNIPFYGFAVMCIDHPTVQDLVGRIEDRRIVTYGENPQADVRLIDVDLKGGQSRFRVMIRDRRPGFRLEMEDLVLPMPGKHNALNATAALAVAHELGVSPEAIRRALAGFGGVKRRFTRTGEWNGAQIFDDYGHHPVEIKAVLKAARASTEGRVVAVVQPHRYTRLASLFDDFCTCFNDADTVIVAPVYAAGEAPIEGFDRDALVAGLKSRGHRNAVALERSEDLAAMISGLAGPGDYVVCLGAGNITQWAYALPGELAALGEKAA.

An ATP-binding site is contributed by 114–120 (GTHGKTT).

The protein belongs to the MurCDEF family.

The protein resides in the cytoplasm. It catalyses the reaction UDP-N-acetyl-alpha-D-muramate + L-alanine + ATP = UDP-N-acetyl-alpha-D-muramoyl-L-alanine + ADP + phosphate + H(+). Its pathway is cell wall biogenesis; peptidoglycan biosynthesis. Its function is as follows. Cell wall formation. This chain is UDP-N-acetylmuramate--L-alanine ligase, found in Methylobacterium nodulans (strain LMG 21967 / CNCM I-2342 / ORS 2060).